Here is a 300-residue protein sequence, read N- to C-terminus: Bifunctional protein FolD 1 (300 aa).

NADP(+)-binding positions include 166 to 168 (GRS), S191, and I232.

It belongs to the tetrahydrofolate dehydrogenase/cyclohydrolase family. Homodimer.

The enzyme catalyses (6R)-5,10-methylene-5,6,7,8-tetrahydrofolate + NADP(+) = (6R)-5,10-methenyltetrahydrofolate + NADPH. It catalyses the reaction (6R)-5,10-methenyltetrahydrofolate + H2O = (6R)-10-formyltetrahydrofolate + H(+). Its pathway is one-carbon metabolism; tetrahydrofolate interconversion. Catalyzes the oxidation of 5,10-methylenetetrahydrofolate to 5,10-methenyltetrahydrofolate and then the hydrolysis of 5,10-methenyltetrahydrofolate to 10-formyltetrahydrofolate. The chain is Bifunctional protein FolD 1 from Roseobacter denitrificans (strain ATCC 33942 / OCh 114) (Erythrobacter sp. (strain OCh 114)).